Consider the following 209-residue polypeptide: GTP-binding nuclear protein Ran1B (209 aa).

Residues 1–162 (NFKLVIVGDG…LYLARKLAGD (162 aa)) enclose the Small GTPase Ran-type domain. 9–16 (DGGTGKTT) lines the GTP pocket. The interval 28–36 (KKYEPTIGV) is switch-I. GTP-binding positions include Gly59, 113-116 (NKVD), and 141-143 (SAK). Residues 59-75 (GQEKFGGLRDGYYIHGQ) form a switch-II region. Residues 187-200 (QHEAELAAAASQPL) show a composition bias toward low complexity. Positions 187–209 (QHEAELAAAASQPLPDDDDDAFD) are disordered.

This sequence belongs to the small GTPase superfamily. Ran family. As to quaternary structure, found in a nuclear export complex with RanGTP, exportin and pre-miRNA.

It is found in the nucleus. In terms of biological role, GTP-binding protein involved in nucleocytoplasmic transport. Required for the import of protein into the nucleus and also for RNA export. Involved in chromatin condensation and control of cell cycle. The sequence is that of GTP-binding nuclear protein Ran1B (RAN1B) from Lotus japonicus (Lotus corniculatus var. japonicus).